The chain runs to 221 residues: uncharacterized protein (221 aa).

Positions 1–16 are enriched in basic and acidic residues; sequence MESSRWDKDPPGERRP. A disordered region spans residues 1–64; that stretch reads MESSRWDKDP…SHTPQTNTRR (64 aa).

This is an uncharacterized protein from Homo sapiens (Human).